Reading from the N-terminus, the 211-residue chain is ATP-dependent dethiobiotin synthetase BioD (211 aa).

10–15 serves as a coordination point for ATP; sequence GIGKTY. Threonine 14 contacts Mg(2+). The active site involves lysine 35. Position 39 (serine 39) interacts with substrate. Residues aspartate 44, 105–108, and 165–166 each bind ATP; these read EGAG and NC. Mg(2+) is bound by residues aspartate 44 and glutamate 105.

The protein belongs to the dethiobiotin synthetase family. In terms of assembly, homodimer. Requires Mg(2+) as cofactor.

The protein resides in the cytoplasm. The enzyme catalyses (7R,8S)-7,8-diammoniononanoate + CO2 + ATP = (4R,5S)-dethiobiotin + ADP + phosphate + 3 H(+). Its pathway is cofactor biosynthesis; biotin biosynthesis; biotin from 7,8-diaminononanoate: step 1/2. Catalyzes a mechanistically unusual reaction, the ATP-dependent insertion of CO2 between the N7 and N8 nitrogen atoms of 7,8-diaminopelargonic acid (DAPA, also called 7,8-diammoniononanoate) to form a ureido ring. This chain is ATP-dependent dethiobiotin synthetase BioD, found in Methanococcus vannielii (strain ATCC 35089 / DSM 1224 / JCM 13029 / OCM 148 / SB).